The following is a 73-amino-acid chain: MGSFSIWHWLIVLVIVMLVFGTKKLRNIGQDLGGAVKGFKDGMKSAEDPNEQIPQSTTTAEKTVDVQAKDINK.

The helical transmembrane segment at 1 to 21 (MGSFSIWHWLIVLVIVMLVFG) threads the bilayer. The disordered stretch occupies residues 44 to 73 (KSAEDPNEQIPQSTTTAEKTVDVQAKDINK). The span at 52–61 (QIPQSTTTAE) shows a compositional bias: polar residues. A compositionally biased stretch (basic and acidic residues) spans 62–73 (KTVDVQAKDINK).

This sequence belongs to the TatA/E family. As to quaternary structure, the Tat system comprises two distinct complexes: a TatABC complex, containing multiple copies of TatA, TatB and TatC subunits, and a separate TatA complex, containing only TatA subunits. Substrates initially bind to the TatABC complex, which probably triggers association of the separate TatA complex to form the active translocon.

It is found in the cell inner membrane. Its function is as follows. Part of the twin-arginine translocation (Tat) system that transports large folded proteins containing a characteristic twin-arginine motif in their signal peptide across membranes. TatA could form the protein-conducting channel of the Tat system. In Polynucleobacter asymbioticus (strain DSM 18221 / CIP 109841 / QLW-P1DMWA-1) (Polynucleobacter necessarius subsp. asymbioticus), this protein is Sec-independent protein translocase protein TatA.